A 363-amino-acid polypeptide reads, in one-letter code: Chorismate synthase (363 aa).

R48 and R54 together coordinate NADP(+). FMN is bound by residues 125–127 (RSS), 237–238 (NA), G277, 292–296 (KPTSS), and R318.

This sequence belongs to the chorismate synthase family. Homotetramer. FMNH2 serves as cofactor.

The catalysed reaction is 5-O-(1-carboxyvinyl)-3-phosphoshikimate = chorismate + phosphate. It participates in metabolic intermediate biosynthesis; chorismate biosynthesis; chorismate from D-erythrose 4-phosphate and phosphoenolpyruvate: step 7/7. Its function is as follows. Catalyzes the anti-1,4-elimination of the C-3 phosphate and the C-6 proR hydrogen from 5-enolpyruvylshikimate-3-phosphate (EPSP) to yield chorismate, which is the branch point compound that serves as the starting substrate for the three terminal pathways of aromatic amino acid biosynthesis. This reaction introduces a second double bond into the aromatic ring system. This is Chorismate synthase from Pseudomonas putida (strain GB-1).